The chain runs to 324 residues: Putative transport protein TM_1187 (324 aa).

Helical transmembrane passes span 12-32 (LYLV…TALI), 62-82 (ISNV…FPVI), 105-125 (IPGW…EGAL), 131-151 (IVGY…TAFI), 190-210 (GGQV…AFIF), 227-247 (FVPY…AFSV), 252-272 (GLLI…WVLA), and 285-305 (FIIL…GVLI).

It belongs to the autoinducer-2 exporter (AI-2E) (TC 2.A.86) family.

The protein localises to the cell membrane. The sequence is that of Putative transport protein TM_1187 from Thermotoga maritima (strain ATCC 43589 / DSM 3109 / JCM 10099 / NBRC 100826 / MSB8).